Reading from the N-terminus, the 278-residue chain is S-formylglutathione hydrolase YeiG (278 aa).

Active-site charge relay system residues include serine 145, aspartate 223, and histidine 256.

This sequence belongs to the esterase D family.

The catalysed reaction is S-formylglutathione + H2O = formate + glutathione + H(+). Functionally, serine hydrolase involved in the detoxification of formaldehyde. Hydrolyzes S-formylglutathione to glutathione and formate. The chain is S-formylglutathione hydrolase YeiG (yeiG) from Shigella flexneri serotype 5b (strain 8401).